A 428-amino-acid polypeptide reads, in one-letter code: Glutamate-1-semialdehyde 2,1-aminomutase (428 aa).

An N6-(pyridoxal phosphate)lysine modification is found at lysine 265.

This sequence belongs to the class-III pyridoxal-phosphate-dependent aminotransferase family. HemL subfamily. Homodimer. Requires pyridoxal 5'-phosphate as cofactor.

It is found in the cytoplasm. It catalyses the reaction (S)-4-amino-5-oxopentanoate = 5-aminolevulinate. It functions in the pathway porphyrin-containing compound metabolism; protoporphyrin-IX biosynthesis; 5-aminolevulinate from L-glutamyl-tRNA(Glu): step 2/2. The chain is Glutamate-1-semialdehyde 2,1-aminomutase from Legionella pneumophila (strain Paris).